The following is a 654-amino-acid chain: Protein fem-1 homolog A (654 aa).

ANK repeat units lie at residues 2–31 (DLHTAVYNAAHDGKLLLLQKLLAGRGREEI), 40–70 (GGGTPLLIAARRGHLDVVEYLVDNCGASVEA), 82–111 (EGAPPLWAASAAGHLAVVRSLLRRGASVNR), 115–145 (TNSTPLRAACFDGHLDVVRYLVGEHKADLEV), 149–178 (HGHTCLMISCYKGHREIARYLLERGAQVNR), 182–211 (KGNTALHDCAESGSLEILQLLLGCHARMER), and 214–243 (YGMTPLLAASVTGHTNIVEYLIQEQPGHGQ). Ser-108 is modified (phosphoserine). Positions 241–265 (HGQLSGTELPGEGSSQMAGNHCSTP) are disordered. The segment covering 253–263 (GSSQMAGNHCS) has biased composition (polar residues). TPR repeat units follow at residues 283–317 (VEALELLGATYVDKKRDLLGALKHWRRAMELRHQG) and 375–408 (SYYIRYRGAVYADSGNFERCIRLWKYALDMQQNN). ANK repeat units follow at residues 519-561 (NGFT…DPDS) and 565-594 (DNNTPLHVAAQNNCPAIMDALIEAGAHMDA). Position 608 is a phosphoserine (Ser-608).

This sequence belongs to the fem-1 family. As to quaternary structure, component of a CRL2 E3 ubiquitin-protein ligase complex, also named ECS (Elongin BC-CUL2/5-SOCS-box protein) complex, composed of CUL2, Elongin BC (ELOB and ELOC), RBX1 and substrate-specific adapter FEM1A. Interacts with PTGER4. Interacts with NFKB1; the interaction is direct. Phosphorylated; highly phosphorylated in myoblasts and myotubes. Phosphorylation at Ser-108 and Ser-608 promote PGE2-EP4-mediated inhibition of inflammation. Dephosphorylated by protein phosphatase 2A (PP2A).

The protein resides in the mitochondrion. It localises to the cytoplasm. The protein operates within protein modification; protein ubiquitination. In terms of biological role, substrate-recognition component of a Cul2-RING (CRL2) E3 ubiquitin-protein ligase complex of the DesCEND (destruction via C-end degrons) pathway, which recognizes a C-degron located at the extreme C terminus of target proteins, leading to their ubiquitination and degradation. The C-degron recognized by the DesCEND pathway is usually a motif of less than ten residues and can be present in full-length proteins, truncated proteins or proteolytically cleaved forms. The CRL2(FEM1A) complex specifically recognizes proteins with an arginine at the C-terminus: recognizes and binds proteins ending with -Lys/Arg-Xaa-Arg and -Lys/Arg-Xaa-Xaa-Arg C-degrons, such as SIL1 or OR51B2, leading to their ubiquitination and degradation. Involved in PGE2-EP4-mediated inhibition of inflammation of macrophages via interaction with NFKB1 and PTGER4. Promotes inflammation in brain microglia through MAP2K4/MKK4-mediated signaling. This chain is Protein fem-1 homolog A, found in Rattus norvegicus (Rat).